A 262-amino-acid chain; its full sequence is Octanoyltransferase (262 aa).

Residues 60 to 248 (GTADELVWLV…AFEMVFGPTR (189 aa)) enclose the BPL/LPL catalytic domain. Residues 99-106 (RGGEYTYH), 179-181 (AIG), and 192-194 (GLS) each bind substrate. Catalysis depends on cysteine 210, which acts as the Acyl-thioester intermediate.

This sequence belongs to the LipB family.

Its subcellular location is the cytoplasm. The catalysed reaction is octanoyl-[ACP] + L-lysyl-[protein] = N(6)-octanoyl-L-lysyl-[protein] + holo-[ACP] + H(+). Its pathway is protein modification; protein lipoylation via endogenous pathway; protein N(6)-(lipoyl)lysine from octanoyl-[acyl-carrier-protein]: step 1/2. Its function is as follows. Catalyzes the transfer of endogenously produced octanoic acid from octanoyl-acyl-carrier-protein onto the lipoyl domains of lipoate-dependent enzymes. Lipoyl-ACP can also act as a substrate although octanoyl-ACP is likely to be the physiological substrate. The sequence is that of Octanoyltransferase from Sinorhizobium medicae (strain WSM419) (Ensifer medicae).